The primary structure comprises 86 residues: Heat shock factor-binding protein (86 aa).

Residues M34–M63 adopt a coiled-coil conformation. A required for interactions with heat shock factors (HSFs) region spans residues I42–L52. Residues L59–S86 are disordered.

It belongs to the HSBP1 family. As to quaternary structure, homohexamer. Interacts with HSFA1A, HSFA1B and HSFA2. Mostly expressed in siliques and flowers, and, to a lower extent, in roots, stems and leaves.

Its subcellular location is the nucleus. The protein resides in the cytoplasm. It is found in the cytosol. Its function is as follows. Negative regulator of the heat shock (HS) response. Affects negatively HSFA1B DNA-binding capacity in vitro. Involved in acquired thermotolerance but not basal thermotolerance. Crucial for seed development, after fertilization and during embryogenesis. The sequence is that of Heat shock factor-binding protein from Arabidopsis thaliana (Mouse-ear cress).